A 259-amino-acid chain; its full sequence is 5'-nucleotidase SurE (259 aa).

Positions 8, 9, 40, and 92 each coordinate a divalent metal cation.

It belongs to the SurE nucleotidase family. A divalent metal cation is required as a cofactor.

The protein resides in the cytoplasm. It carries out the reaction a ribonucleoside 5'-phosphate + H2O = a ribonucleoside + phosphate. Nucleotidase that shows phosphatase activity on nucleoside 5'-monophosphates. This is 5'-nucleotidase SurE from Xanthomonas oryzae pv. oryzae (strain MAFF 311018).